A 323-amino-acid polypeptide reads, in one-letter code: uncharacterized protein (323 aa).

A helical transmembrane segment spans residues 4–24; it reads IIFAFIILFVFLLPMIIFYQP.

The protein localises to the membrane. This is an uncharacterized protein from Escherichia coli (strain K12).